Consider the following 42-residue polypeptide: Iota-conotoxin-like R11.15 (42 aa).

4 disulfides stabilise this stretch: cysteine 5/cysteine 19, cysteine 12/cysteine 22, cysteine 18/cysteine 27, and cysteine 21/cysteine 36.

This sequence belongs to the conotoxin I1 superfamily. Expressed by the venom duct.

The protein localises to the secreted. In terms of biological role, iota-conotoxins bind to voltage-gated sodium channels (Nav) and act as agonists by shifting the voltage-dependence of activation to more hyperpolarized levels. Produces general excitatory symptoms. The protein is Iota-conotoxin-like R11.15 of Conus radiatus (Rayed cone).